A 335-amino-acid chain; its full sequence is Protein-arginine kinase (335 aa).

The 224-residue stretch at 21 to 244 (IVMSSRIRLA…NQIIHDEKQI (224 aa)) folds into the Phosphagen kinase C-terminal domain. ATP contacts are provided by residues 24-28 (SSRIR), histidine 82, arginine 115, 166-170 (RASVM), and 197-202 (RGIYGE).

It belongs to the ATP:guanido phosphotransferase family.

The enzyme catalyses L-arginyl-[protein] + ATP = N(omega)-phospho-L-arginyl-[protein] + ADP + H(+). Its function is as follows. Catalyzes the specific phosphorylation of arginine residues in proteins. This Staphylococcus aureus (strain Mu3 / ATCC 700698) protein is Protein-arginine kinase.